The primary structure comprises 340 residues: DNA-directed RNA polymerase subunit alpha (340 aa).

The alpha N-terminal domain (alpha-NTD) stretch occupies residues Met-1–Asp-237. Positions Phe-256 to Glu-340 are alpha C-terminal domain (alpha-CTD).

The protein belongs to the RNA polymerase alpha chain family. Homodimer. The RNAP catalytic core consists of 2 alpha, 1 beta, 1 beta' and 1 omega subunit. When a sigma factor is associated with the core the holoenzyme is formed, which can initiate transcription.

The enzyme catalyses RNA(n) + a ribonucleoside 5'-triphosphate = RNA(n+1) + diphosphate. Its function is as follows. DNA-dependent RNA polymerase catalyzes the transcription of DNA into RNA using the four ribonucleoside triphosphates as substrates. The protein is DNA-directed RNA polymerase subunit alpha of Desulforapulum autotrophicum (strain ATCC 43914 / DSM 3382 / VKM B-1955 / HRM2) (Desulfobacterium autotrophicum).